Reading from the N-terminus, the 491-residue chain is Glutamate--tRNA ligase (491 aa).

Positions 14-24 (PSPTGSPHVGL) match the 'HIGH' region motif. Residues cysteine 111, cysteine 113, cysteine 136, and aspartate 138 each coordinate Zn(2+). A 'KMSKS' region motif is present at residues 257–261 (KLSKR). Lysine 260 serves as a coordination point for ATP.

Belongs to the class-I aminoacyl-tRNA synthetase family. Glutamate--tRNA ligase type 1 subfamily. As to quaternary structure, monomer. It depends on Zn(2+) as a cofactor.

It localises to the cytoplasm. The enzyme catalyses tRNA(Glu) + L-glutamate + ATP = L-glutamyl-tRNA(Glu) + AMP + diphosphate. Functionally, catalyzes the attachment of glutamate to tRNA(Glu) in a two-step reaction: glutamate is first activated by ATP to form Glu-AMP and then transferred to the acceptor end of tRNA(Glu). The sequence is that of Glutamate--tRNA ligase from Nocardioides sp. (strain ATCC BAA-499 / JS614).